The chain runs to 674 residues: UvrABC system protein C (674 aa).

Residues 16–95 (TNPGVYRFRD…IKEFKPRFNV (80 aa)) form the GIY-YIG domain. Residues 207–242 (KRFTNKLEKQMAAAVARLDYEQAARIRDDITALRKV) form the UVR domain.

It belongs to the UvrC family. Interacts with UvrB in an incision complex.

Its subcellular location is the cytoplasm. The UvrABC repair system catalyzes the recognition and processing of DNA lesions. UvrC both incises the 5' and 3' sides of the lesion. The N-terminal half is responsible for the 3' incision and the C-terminal half is responsible for the 5' incision. The sequence is that of UvrABC system protein C from Pseudarthrobacter chlorophenolicus (strain ATCC 700700 / DSM 12829 / CIP 107037 / JCM 12360 / KCTC 9906 / NCIMB 13794 / A6) (Arthrobacter chlorophenolicus).